Consider the following 730-residue polypeptide: Nitrogen fixation protein FixI (730 aa).

The Cytoplasmic segment spans residues 1–101 (MHVTRDFSHY…AEVAEVAESR (101 aa)). The HMA domain maps to 19–85 (KHIDLAVEGV…RLEELGYKAY (67 aa)). A metal cation contacts are provided by Cys30 and Cys33. The helical transmembrane segment at 102–123 (FLLRCLGVAAFATMNVMMLSIP) threads the bilayer. Residues 124–138 (VWSGNVSDMLPEQRD) lie on the Extracellular side of the membrane. The chain crosses the membrane as a helical span at residues 139–162 (FFHWLSALIALPAAAYAGQPFFRS). The Cytoplasmic portion of the chain corresponds to 163–168 (AWRALS). Residues 169–190 (AKTTNMDVPISIGVILALGMSV) form a helical membrane-spanning segment. The Extracellular portion of the chain corresponds to 191-202 (VETIHHAEHAYF). A helical membrane pass occupies residues 203 to 223 (DAAIMLLTFLLVGRFLDQNMR). Over 224-352 (RRTRAVAGNL…RSRYMRLADR (129 aa)) the chain is Cytoplasmic. A helical transmembrane segment spans residues 353–375 (ASRLYAPVVHATALITILGWVIA). Over 376-382 (GASWHDA) the chain is Extracellular. The chain crosses the membrane as a helical span at residues 383–400 (IVTGVAVLIITCPCALGL). Residues 401-676 (AIPTVQTVAS…DSARKALHLM (276 aa)) are Cytoplasmic-facing. Asp438 functions as the 4-aspartylphosphate intermediate in the catalytic mechanism. Residues Asp622 and Asp626 each contribute to the Mg(2+) site. Residues 677 to 696 (RQNLWLAIGYNVLAVPVAIS) traverse the membrane as a helical segment. The Extracellular portion of the chain corresponds to 697–701 (GVVTP). A helical membrane pass occupies residues 702-720 (LIAAAAMSGSSILVMLNSL). The Cytoplasmic portion of the chain corresponds to 721-730 (RARSDSREIV).

It belongs to the cation transport ATPase (P-type) (TC 3.A.3) family. Type IB subfamily.

It is found in the cell membrane. The catalysed reaction is ATP + H2O = ADP + phosphate + H(+). Functionally, fixI is a pump of a specific cation involved in symbiotic nitrogen fixation. The four proteins FixG, FixH, FixI, and FixS may participate in a membrane-bound complex coupling the FixI cation pump with a redox process catalyzed by FixG. This is Nitrogen fixation protein FixI (fixI) from Bradyrhizobium diazoefficiens (strain JCM 10833 / BCRC 13528 / IAM 13628 / NBRC 14792 / USDA 110).